Consider the following 440-residue polypeptide: Golgi reassembly-stacking protein 1 (440 aa).

Gly-2 carries the N-myristoyl glycine lipid modification. 2 consecutive PDZ GRASP-type domains span residues 15 to 105 and 111 to 199; these read EGFH…FCSF and QVWH…YGYL. The segment at 15–215 is GRASP; sequence EGFHLHGVQE…PPSYHKKPPG (201 aa). Residues His-18, His-20, and Cys-103 each contribute to the Zn(2+) site. The tract at residues 190-202 is essential for interaction with GOLGA2/GM130; the sequence is LGCGIGYGYLHRI. 3 disordered regions span residues 205–248, 261–301, and 327–440; these read QPPS…ETGS, PGSS…PVQR, and LPSS…STTE. The segment covering 214-239 has biased composition (pro residues); it reads PGTPPPSALPLGAPPPDALPPGPTPE. Thr-216 is modified (phosphothreonine). A compositionally biased stretch (low complexity) spans 327–336; the sequence is LPSSTELTTT. Polar residues predominate over residues 337 to 351; it reads AVSTSGPEDICSSSS. Phosphoserine is present on residues Ser-362, Ser-364, and Ser-373.

This sequence belongs to the GORASP family. Homodimer. Forms higher-order oligomers under interphase but not mitotic conditions. Dimers of the protein on one membrane might be able to interact with dimers on another and so stack cisternae. Interacts with the C-terminus of GOLGA2/GM130 under both mitotic and non-mitotic conditions. The interaction is critical for the correct targeting of both proteins to the cis-Golgi. Interacts with TMED2 and TMED3. Post-translationally, phosphorylated by CDC2/B1 and PLK kinases during mitosis. Phosphorylation cycle correlates with the cisternal stacking cycle. Phosphorylation of the homodimer prevents the association of dimers into higher-order oligomers, leading to cisternal unstacking. In terms of processing, target for caspase-3 cleavage during apoptosis. The cleavage contributes to Golgi fragmentation and occurs very early in the execution phase of apoptosis. Myristoylated.

It localises to the golgi apparatus. It is found in the cis-Golgi network membrane. The protein resides in the endoplasmic reticulum-Golgi intermediate compartment membrane. Key structural protein of the Golgi apparatus. The membrane cisternae of the Golgi apparatus adhere to each other to form stacks, which are aligned side by side to form the Golgi ribbon. Acting in concert with GORASP2/GRASP55, is required for the formation and maintenance of the Golgi ribbon, and may be dispensable for the formation of stacks. However, other studies suggest that GORASP1 plays an important role in assembly and membrane stacking of the cisternae, and in the reassembly of Golgi stacks after breakdown during mitosis. Caspase-mediated cleavage of GORASP1 is required for fragmentation of the Golgi during apoptosis. Also mediates, via its interaction with GOLGA2/GM130, the docking of transport vesicles with the Golgi membranes. Mediates ER stress-induced unconventional (ER/Golgi-independent) trafficking of core-glycosylated CFTR to cell membrane. In Homo sapiens (Human), this protein is Golgi reassembly-stacking protein 1 (GORASP1).